An 89-amino-acid polypeptide reads, in one-letter code: Small ribosomal subunit protein uS14A (89 aa).

It belongs to the universal ribosomal protein uS14 family. As to quaternary structure, part of the 30S ribosomal subunit. Contacts proteins S3 and S10.

Binds 16S rRNA, required for the assembly of 30S particles and may also be responsible for determining the conformation of the 16S rRNA at the A site. This chain is Small ribosomal subunit protein uS14A, found in Oceanobacillus iheyensis (strain DSM 14371 / CIP 107618 / JCM 11309 / KCTC 3954 / HTE831).